The following is a 197-amino-acid chain: Xanthine phosphoribosyltransferase (197 aa).

Xanthine is bound by residues Leu20 and Asn27. 128–132 (ANGQA) contacts 5-phospho-alpha-D-ribose 1-diphosphate. Lys156 contacts xanthine.

It belongs to the purine/pyrimidine phosphoribosyltransferase family. Xpt subfamily. As to quaternary structure, homodimer.

The protein resides in the cytoplasm. It catalyses the reaction XMP + diphosphate = xanthine + 5-phospho-alpha-D-ribose 1-diphosphate. It functions in the pathway purine metabolism; XMP biosynthesis via salvage pathway; XMP from xanthine: step 1/1. Converts the preformed base xanthine, a product of nucleic acid breakdown, to xanthosine 5'-monophosphate (XMP), so it can be reused for RNA or DNA synthesis. In Bacillus cereus (strain ATCC 10987 / NRS 248), this protein is Xanthine phosphoribosyltransferase.